Reading from the N-terminus, the 267-residue chain is Hydroxyethylthiazole kinase (267 aa).

A substrate-binding site is contributed by methionine 42. Residues cysteine 118 and threonine 162 each contribute to the ATP site. Substrate is bound at residue glycine 189.

The protein belongs to the Thz kinase family. The cofactor is Mg(2+).

The catalysed reaction is 5-(2-hydroxyethyl)-4-methylthiazole + ATP = 4-methyl-5-(2-phosphooxyethyl)-thiazole + ADP + H(+). Its pathway is cofactor biosynthesis; thiamine diphosphate biosynthesis; 4-methyl-5-(2-phosphoethyl)-thiazole from 5-(2-hydroxyethyl)-4-methylthiazole: step 1/1. Catalyzes the phosphorylation of the hydroxyl group of 4-methyl-5-beta-hydroxyethylthiazole (THZ). The chain is Hydroxyethylthiazole kinase from Rubrobacter xylanophilus (strain DSM 9941 / JCM 11954 / NBRC 16129 / PRD-1).